A 620-amino-acid polypeptide reads, in one-letter code: Chaperone protein HscA homolog (620 aa).

The protein belongs to the heat shock protein 70 family.

Functionally, chaperone involved in the maturation of iron-sulfur cluster-containing proteins. Has a low intrinsic ATPase activity which is markedly stimulated by HscB. The chain is Chaperone protein HscA homolog from Bordetella pertussis (strain Tohama I / ATCC BAA-589 / NCTC 13251).